Here is a 156-residue protein sequence, read N- to C-terminus: UPF0251 protein Sfum_2819 (156 aa).

This sequence belongs to the UPF0251 family.

In Syntrophobacter fumaroxidans (strain DSM 10017 / MPOB), this protein is UPF0251 protein Sfum_2819.